The following is a 236-amino-acid chain: Ribose-5-phosphate isomerase A (236 aa).

Substrate contacts are provided by residues 31–34, 84–87, and 97–100; these read TGST, DGAD, and KGGG. Glutamate 106 functions as the Proton acceptor in the catalytic mechanism. Lysine 124 is a binding site for substrate.

It belongs to the ribose 5-phosphate isomerase family. Homodimer.

It carries out the reaction aldehydo-D-ribose 5-phosphate = D-ribulose 5-phosphate. It participates in carbohydrate degradation; pentose phosphate pathway; D-ribose 5-phosphate from D-ribulose 5-phosphate (non-oxidative stage): step 1/1. Its function is as follows. Catalyzes the reversible conversion of ribose-5-phosphate to ribulose 5-phosphate. In Polynucleobacter necessarius subsp. necessarius (strain STIR1), this protein is Ribose-5-phosphate isomerase A.